A 387-amino-acid chain; its full sequence is Protoheme IX farnesyltransferase, mitochondrial (387 aa).

8 consecutive transmembrane segments (helical) span residues 95 to 115 (LTVLVVLSTMSSYALAPYPGL), 117 to 137 (FNTLAWLTMGTALCSISANAF), 183 to 203 (FLVNPTVGWLGLGNIVLYMGI), 212 to 232 (IVNTWVGSLVGAIPPLMGWAA), 242 to 262 (PGGLITAAMLFAWQFPHFNAF), 284 to 306 (ALNARVSLRYALAFLPLSYAYIS), 311 to 330 (GPWYAVPATGTNMFLIARAW), and 345 to 365 (FFASLLHLPLLFTLTLACHMI).

It belongs to the UbiA prenyltransferase family.

Its subcellular location is the mitochondrion membrane. The catalysed reaction is heme b + (2E,6E)-farnesyl diphosphate + H2O = Fe(II)-heme o + diphosphate. Functionally, converts protoheme IX and farnesyl diphosphate to heme O. The sequence is that of Protoheme IX farnesyltransferase, mitochondrial (cox10) from Schizosaccharomyces pombe (strain 972 / ATCC 24843) (Fission yeast).